The sequence spans 289 residues: Nucleotide-binding protein COPRO5265_0725 (289 aa).

Residue 9-16 (GLSGAGKS) coordinates ATP. 59 to 62 (DSRS) contributes to the GTP binding site.

This sequence belongs to the RapZ-like family.

Its function is as follows. Displays ATPase and GTPase activities. In Coprothermobacter proteolyticus (strain ATCC 35245 / DSM 5265 / OCM 4 / BT), this protein is Nucleotide-binding protein COPRO5265_0725.